Consider the following 240-residue polypeptide: Proteasome subunit beta 1 (240 aa).

Positions 1 to 46 (MRDMTPGPDLSGPQAADEFQSDPYAPEVGELPEQSAQDSEKVNKTG) are cleaved as a propeptide — removed in mature form; by autocatalysis. The interval 1-48 (MRDMTPGPDLSGPQAADEFQSDPYAPEVGELPEQSAQDSEKVNKTGTT) is disordered. Threonine 47 acts as the Nucleophile in catalysis.

It belongs to the peptidase T1B family. The 20S proteasome core is composed of 14 alpha and 14 beta subunits that assemble into four stacked heptameric rings, resulting in a barrel-shaped structure. The two inner rings, each composed of seven catalytic beta subunits, are sandwiched by two outer rings, each composed of seven alpha subunits. The catalytic chamber with the active sites is on the inside of the barrel. Has a gated structure, the ends of the cylinder being occluded by the N-termini of the alpha-subunits. Is capped at one or both ends by the proteasome regulatory ATPase, PAN.

It is found in the cytoplasm. The catalysed reaction is Cleavage of peptide bonds with very broad specificity.. With respect to regulation, the formation of the proteasomal ATPase PAN-20S proteasome complex, via the docking of the C-termini of PAN into the intersubunit pockets in the alpha-rings, triggers opening of the gate for substrate entry. Interconversion between the open-gate and close-gate conformations leads to a dynamic regulation of the 20S proteasome proteolysis activity. Functionally, component of the proteasome core, a large protease complex with broad specificity involved in protein degradation. This chain is Proteasome subunit beta 1, found in Haloarcula marismortui (strain ATCC 43049 / DSM 3752 / JCM 8966 / VKM B-1809) (Halobacterium marismortui).